Reading from the N-terminus, the 439-residue chain is ATP-dependent protease ATPase subunit HslU (439 aa).

ATP contacts are provided by residues Ile-17, 59–64 (GVGKTE), Asp-251, Glu-317, and Arg-389.

It belongs to the ClpX chaperone family. HslU subfamily. In terms of assembly, a double ring-shaped homohexamer of HslV is capped on each side by a ring-shaped HslU homohexamer. The assembly of the HslU/HslV complex is dependent on binding of ATP.

Its subcellular location is the cytoplasm. ATPase subunit of a proteasome-like degradation complex; this subunit has chaperone activity. The binding of ATP and its subsequent hydrolysis by HslU are essential for unfolding of protein substrates subsequently hydrolyzed by HslV. HslU recognizes the N-terminal part of its protein substrates and unfolds these before they are guided to HslV for hydrolysis. The protein is ATP-dependent protease ATPase subunit HslU of Campylobacter jejuni subsp. jejuni serotype O:2 (strain ATCC 700819 / NCTC 11168).